The following is a 728-amino-acid chain: Fibulin-1 (728 aa).

The first 17 residues, 1-17, serve as a signal peptide directing secretion; sequence MRICFLLLAFLVAETFA. Intrachain disulfides connect Cys23-Cys49, Cys24-Cys56, Cys37-Cys57, Cys66-Cys94, Cys79-Cys95, Cys97-Cys121, Cys98-Cys128, Cys111-Cys129, Cys159-Cys168, Cys164-Cys178, Cys180-Cys279, Cys285-Cys298, Cys292-Cys307, Cys347-Cys359, Cys353-Cys368, Cys375-Cys388, Cys394-Cys404, Cys399-Cys413, Cys415-Cys428, Cys434-Cys448, Cys442-Cys457, Cys459-Cys472, Cys478-Cys489, Cys485-Cys498, Cys500-Cys513, Cys519-Cys534, Cys530-Cys543, Cys545-Cys558, Cys564-Cys576, and Cys569-Cys585. Anaphylatoxin-like domains are found at residues 23–64, 65–96, and 97–129; these read CCAG…LLDN, ACDS…ECCD, and CCLL…NKCC. The EGF-like 1 domain maps to 155–194; the sequence is LGDRCASSHCEHLCHDRGGEKVECSCRSGFDLAPDGMACV. In terms of domain architecture, EGF-like 2; calcium-binding spans 195 to 280; that stretch reads DRNECLTRQS…GWLFQHGHCV (86 aa). The EGF-like 3; calcium-binding domain maps to 281–344; sequence DVDECNLGSH…YPKNGMCNDI (64 aa). The EGF-like 4; calcium-binding domain occupies 343–389; sequence DIDECVTGHNCGAGEECVNTPGSFRCQQKGNLCAHGYEVNGATGFCE. In terms of domain architecture, EGF-like 5; calcium-binding spans 390 to 429; that stretch reads DVNECQQGVCGSMECINLPGTYKCKCGPGYEFNDAKKRCE. The 44-residue stretch at 430–473 folds into the EGF-like 6; calcium-binding domain; the sequence is DVDECIKFAGHVCDLSAECINTIGSFECKCKPGFQLASDGRRCE. In terms of domain architecture, EGF-like 7; calcium-binding spans 474 to 514; the sequence is DVNECTTGIAACEQKCVNIPGSYQCICDRGFALGPDGTKCE. One can recognise an EGF-like 8; calcium-binding domain in the interval 515–559; the sequence is DIDECSIWAGSGNDLCMGGCINTKGSYLCQCPPGYKIQPDGRTCV. Residues 560–610 enclose the EGF-like 9; calcium-binding domain; sequence DVDECAMGECAGSDKVCVNTLGSFKCHSIDCPTNYIHDSLNKNQIADGYSC. The N-linked (GlcNAc...) asparagine glycan is linked to Asn624.

Belongs to the fibulin family. As to quaternary structure, homomultimerizes and interacts with various extracellular matrix components. Expressed in head muscle cells, anterior and posterior intestinal cells. Isoform a: Expressed in male and hermaphrodite gonad, anterior and posterior intestine and pharyngeal basement membranes, body-wall muscle, GLR cells, uterine attachment and mechanosensory neurons. Isoform c: Expressed on ALM/PLM mechanosensory neuron attachments, in flexible tracks connecting the pharyngeal, body-wall-muscle basement membranes and in uterine attachments.

The protein resides in the secreted. Its subcellular location is the extracellular space. It is found in the extracellular matrix. The protein localises to the basement membrane. Functionally, incorporated into fibronectin-containing matrix fibers. Plays a role in cell adhesion and migration along protein fibers within the extracellular matrix (ECM). Important for certain developmental processes and contributes to the supramolecular organization of ECM architecture, in particular to those of basement membranes. Involved in regulating the shape and adhesion of cells in the developing pharynx, intestine, body-wall muscle and gonadal tissue. During gonadogenesis, regulates the width of gonads and the migration of distal tip cells (DTC). Together with type IV collagen let-2 and downstream of metalloprotease mig-17, recruits nidogen nid-1 to the gonad basement membrane thereby inducing basement membrane remodeling required for the directional migration of DTCs. Acts antagonistically with metalloprotease gon-1 to maintain optimal levels of type IV collagen emb-9 in the gonad basement membrane during gonadogenesis. Required for larval development. Its function is as follows. Involved in the assembly of the flexible hemicentin-containing tracks found joining the pharynx and body-wall-muscle basement membranes. The polypeptide is Fibulin-1 (fbl-1) (Caenorhabditis elegans).